A 299-amino-acid polypeptide reads, in one-letter code: Troponin T, cardiac muscle (299 aa).

A compositionally biased stretch (acidic residues) spans Met-1–Val-71. Disordered regions lie at residues Met-1–Val-97 and Asp-137–Lys-220. Ser-2 is modified (N-acetylserine). Position 2 is a phosphoserine (Ser-2). 2 stretches are compositionally biased toward basic and acidic residues: residues Asp-137–Arg-185 and Gln-204–Lys-220. At Thr-205 the chain carries Phosphothreonine; by PKC/PRKCA. Ser-209 carries the post-translational modification Phosphoserine; by PKC/PRKCA. A Phosphothreonine; by PKC/PRKCA and RAF1 modification is found at Thr-214. At Thr-295 the chain carries Phosphothreonine; by PKC/PRKCA.

Belongs to the troponin T family. Phosphorylation at Thr-214 by PRKCA induces significant reduction in myofilament calcium sensitivity and actomyosin ATPase activity.

Troponin T is the tropomyosin-binding subunit of troponin, the thin filament regulatory complex which confers calcium-sensitivity to striated muscle actomyosin ATPase activity. In Rattus norvegicus (Rat), this protein is Troponin T, cardiac muscle (Tnnt2).